The following is a 493-amino-acid chain: Dynein regulatory complex subunit 2 (493 aa).

Coiled-coil stretches lie at residues 99–163 and 253–280; these read DSVI…RKLI and KDEKSSKEIETQMKKIQKLQETIGILKG.

Belongs to the DRC2 family. Component of the nexin-dynein regulatory complex (N-DRC). Interacts with DRC1.

It localises to the cytoplasm. Its subcellular location is the cytoskeleton. The protein localises to the flagellum basal body. It is found in the cell projection. The protein resides in the cilium. It localises to the flagellum. Its subcellular location is the flagellum axoneme. Component of the nexin-dynein regulatory complex (N-DRC), a key regulator of ciliary/flagellar motility which maintains the alignment and integrity of the distal axoneme and regulates microtubule sliding in motile axonemes. Plays a critical role in the assembly of N-DRC and also stabilizes the assembly of multiple inner dynein arms and radial spokes. Coassembles with DRC1 to form a central scaffold needed for assembly of the N-DRC and its attachment to the outer doublet microtubules. The chain is Dynein regulatory complex subunit 2 (Ccdc65) from Mus musculus (Mouse).